Consider the following 141-residue polypeptide: Large ribosomal subunit protein uL11c (141 aa).

It belongs to the universal ribosomal protein uL11 family. Part of the ribosomal stalk of the 50S ribosomal subunit. Interacts with L10 and the large rRNA to form the base of the stalk. L10 forms an elongated spine to which L12 dimers bind in a sequential fashion forming a multimeric L10(L12)X complex.

The protein localises to the plastid. It is found in the chloroplast. Forms part of the ribosomal stalk which helps the ribosome interact with GTP-bound translation factors. In Trieres chinensis (Marine centric diatom), this protein is Large ribosomal subunit protein uL11c.